The primary structure comprises 214 residues: NADH-quinone oxidoreductase subunit C (214 aa).

The protein belongs to the complex I 30 kDa subunit family. In terms of assembly, NDH-1 is composed of 14 different subunits. Subunits NuoB, C, D, E, F, and G constitute the peripheral sector of the complex.

Its subcellular location is the cell inner membrane. The catalysed reaction is a quinone + NADH + 5 H(+)(in) = a quinol + NAD(+) + 4 H(+)(out). NDH-1 shuttles electrons from NADH, via FMN and iron-sulfur (Fe-S) centers, to quinones in the respiratory chain. The immediate electron acceptor for the enzyme in this species is believed to be ubiquinone. Couples the redox reaction to proton translocation (for every two electrons transferred, four hydrogen ions are translocated across the cytoplasmic membrane), and thus conserves the redox energy in a proton gradient. The chain is NADH-quinone oxidoreductase subunit C from Francisella tularensis subsp. mediasiatica (strain FSC147).